The primary structure comprises 436 residues: UDP-N-acetylmuramoylalanine--D-glutamate ligase (436 aa).

112-118 (GSNGKST) serves as a coordination point for ATP.

The protein belongs to the MurCDEF family.

It localises to the cytoplasm. It catalyses the reaction UDP-N-acetyl-alpha-D-muramoyl-L-alanine + D-glutamate + ATP = UDP-N-acetyl-alpha-D-muramoyl-L-alanyl-D-glutamate + ADP + phosphate + H(+). Its pathway is cell wall biogenesis; peptidoglycan biosynthesis. In terms of biological role, cell wall formation. Catalyzes the addition of glutamate to the nucleotide precursor UDP-N-acetylmuramoyl-L-alanine (UMA). In Photorhabdus laumondii subsp. laumondii (strain DSM 15139 / CIP 105565 / TT01) (Photorhabdus luminescens subsp. laumondii), this protein is UDP-N-acetylmuramoylalanine--D-glutamate ligase.